We begin with the raw amino-acid sequence, 440 residues long: Phosphatidylcholine-sterol acyltransferase (440 aa).

The N-terminal stretch at 1–24 (MGPPGSPWQWVPLLLGLLLPPAAP) is a signal peptide. N-linked (GlcNAc...) asparagine glycosylation is present at asparagine 44. A disulfide bond links cysteine 74 and cysteine 98. N-linked (GlcNAc...) asparagine glycosylation is present at asparagine 108. The Nucleophile role is filled by serine 205. Asparagine 296 carries N-linked (GlcNAc...) asparagine glycosylation. Residues cysteine 337 and cysteine 380 are joined by a disulfide bond. Residues aspartate 369 and histidine 401 each act as charge relay system in the active site. A glycan (N-linked (GlcNAc...) asparagine) is linked at asparagine 408.

Belongs to the AB hydrolase superfamily. Lipase family. Most abundant in liver and cerebellum.

Its subcellular location is the secreted. The enzyme catalyses a sterol + a 1,2-diacyl-sn-glycero-3-phosphocholine = a sterol ester + a 1-acyl-sn-glycero-3-phosphocholine. Its activity is regulated as follows. APOA1 is the most potent activator in plasma. Also activated by APOE, APOC1 and APOA4. Its function is as follows. Central enzyme in the extracellular metabolism of plasma lipoproteins. Synthesized mainly in the liver and secreted into plasma where it converts cholesterol and phosphatidylcholines (lecithins) to cholesteryl esters and lysophosphatidylcholines on the surface of high and low density lipoproteins (HDLs and LDLs). The cholesterol ester is then transported back to the liver. Has a preference for plasma 16:0-18:2 or 18:O-18:2 phosphatidylcholines. Also produced in the brain by primary astrocytes, and esterifies free cholesterol on nascent APOE-containing lipoproteins secreted from glia and influences cerebral spinal fluid (CSF) APOE- and APOA1 levels. Together with APOE and the cholesterol transporter ABCA1, plays a key role in the maturation of glial-derived, nascent lipoproteins. Required for remodeling high-density lipoprotein particles into their spherical forms. In Papio anubis (Olive baboon), this protein is Phosphatidylcholine-sterol acyltransferase (LCAT).